A 407-amino-acid polypeptide reads, in one-letter code: tRNA (guanine(26)-N(2))-dimethyltransferase (407 aa).

Residues 10-400 (AVTHEGRSII…APWGEVLEAV (391 aa)) form the Trm1 methyltransferase domain. Residues R50, R82, D99, and E128 each contribute to the S-adenosyl-L-methionine site.

Belongs to the class I-like SAM-binding methyltransferase superfamily. Trm1 family.

It carries out the reaction guanosine(26) in tRNA + 2 S-adenosyl-L-methionine = N(2)-dimethylguanosine(26) in tRNA + 2 S-adenosyl-L-homocysteine + 2 H(+). Dimethylates a single guanine residue at position 26 of a number of tRNAs using S-adenosyl-L-methionine as donor of the methyl groups. The sequence is that of tRNA (guanine(26)-N(2))-dimethyltransferase from Aeropyrum pernix (strain ATCC 700893 / DSM 11879 / JCM 9820 / NBRC 100138 / K1).